The chain runs to 280 residues: MTFVRQILRNHDIKPVKRLGQCFLADFSVMKKIVELAEIKEDETIVEIGSGLGLMTSLMAERAAWVHAVEIDGKLVSVLKERLKEYHNVTVIHGDILKYDFLTALGENSVKKIKIIGNIPYSISSPILFHILDHRKQISTAVLMMQKEVADRLCAVPGTKAYGIPTVLFGLYARISRELTVAPGCFYPKPEVTSTVVKMLIPEEPLYWVENDALFFRLVKAAFAQRRKTLLNNMKNAHWKDCDAGRIENLLRDMGAGEKIRAEELSIQQFAALCNSLSYS.

S-adenosyl-L-methionine-binding residues include Leu24, Gly49, Glu70, Asp95, and Asn118.

This sequence belongs to the class I-like SAM-binding methyltransferase superfamily. rRNA adenine N(6)-methyltransferase family. RsmA subfamily.

The protein resides in the cytoplasm. It catalyses the reaction adenosine(1518)/adenosine(1519) in 16S rRNA + 4 S-adenosyl-L-methionine = N(6)-dimethyladenosine(1518)/N(6)-dimethyladenosine(1519) in 16S rRNA + 4 S-adenosyl-L-homocysteine + 4 H(+). In terms of biological role, specifically dimethylates two adjacent adenosines (A1518 and A1519) in the loop of a conserved hairpin near the 3'-end of 16S rRNA in the 30S particle. May play a critical role in biogenesis of 30S subunits. The sequence is that of Ribosomal RNA small subunit methyltransferase A from Syntrophus aciditrophicus (strain SB).